The sequence spans 439 residues: Transmembrane protease serine 11F (439 aa).

The Cytoplasmic portion of the chain corresponds to 1 to 33 (MMYAPVEFSQTAYPRIEYQRRQQQFWDPIRLAL). Residues 34–54 (FTLAIVAIVGITIGIVTHFVV) form a helical; Signal-anchor for type II membrane protein membrane-spanning segment. Topologically, residues 55-439 (EDDKSFYYLA…RDWIASKTGL (385 aa)) are extracellular. The region spanning 58–176 (KSFYYLASFQ…PSFSLTPIDS (119 aa)) is the SEA domain. The region spanning 207 to 438 (IVQGRETAME…YRDWIASKTG (232 aa)) is the Peptidase S1 domain. Cys-234 and Cys-250 are disulfide-bonded. Catalysis depends on charge relay system residues His-249 and Asp-294. 2 disulfide bridges follow: Cys-359–Cys-375 and Cys-386–Cys-414. Ser-390 serves as the catalytic Charge relay system.

It belongs to the peptidase S1 family.

The protein localises to the membrane. Probable serine protease. The chain is Transmembrane protease serine 11F (Tmprss11f) from Mus musculus (Mouse).